Here is a 120-residue protein sequence, read N- to C-terminus: FK506-binding protein 1A (120 aa).

Residues 26–114 (GDNVDVHYKG…IFETELVGIK (89 aa)) form the PPIase FKBP-type domain.

Belongs to the FKBP-type PPIase family. FKBP1 subfamily.

It localises to the cytoplasm. It catalyses the reaction [protein]-peptidylproline (omega=180) = [protein]-peptidylproline (omega=0). PPIases accelerate the folding of proteins. It catalyzes the cis-trans isomerization of proline imidic peptide bonds in oligopeptides. The chain is FK506-binding protein 1A (fkr-2) from Neurospora crassa (strain ATCC 24698 / 74-OR23-1A / CBS 708.71 / DSM 1257 / FGSC 987).